The chain runs to 146 residues: Hemoglobin subunit beta/beta' (146 aa).

One can recognise a Globin domain in the interval 2-146 (HWSAEEKQLI…VAHALARKYH (145 aa)). Histidine 63 and histidine 92 together coordinate heme b.

It belongs to the globin family. As to quaternary structure, heterotetramer of two alpha chains and two beta chains. Red blood cells.

In terms of biological role, involved in oxygen transport from the lung to the various peripheral tissues. This is Hemoglobin subunit beta/beta' (HBB) from Chroicocephalus ridibundus (Black-headed gull).